The sequence spans 289 residues: Cyclin-dependent kinase inhibitor 4 (289 aa).

Disordered stretches follow at residues 1–31 (MGKY…ESSI), 56–160 (LQQQ…VSES), and 227–248 (SESN…TTPE). Residues 13 to 28 (AGAGAGGGGGGGGGGE) show a composition bias toward gly residues. The segment covering 56 to 80 (LQQQQQRCLLQKPSSPSSLPPTSAS) has biased composition (low complexity). Residues 134-144 (CGRNPNPRSNL) are compositionally biased toward polar residues.

This sequence belongs to the CDI family. ICK/KRP subfamily. As to quaternary structure, specifically interacts with CDKA-1, but not with CDKB1-1. Interacts with CYCD4-1. Binds to FBL17. Expressed in leaves and flowers and at lower levels in roots.

It is found in the nucleus. It localises to the nucleoplasm. Functionally, binds and inhibits CYCD2-1/CDKA-1 complex kinase activity. May target specifically CDKA-1. The chain is Cyclin-dependent kinase inhibitor 4 (KRP4) from Arabidopsis thaliana (Mouse-ear cress).